Consider the following 810-residue polypeptide: Leucine--tRNA ligase (810 aa).

A 'HIGH' region motif is present at residues 43–53 (PYPSGTLHIGH). Residues 578-582 (KMSKS) carry the 'KMSKS' region motif. Lys581 is a binding site for ATP.

It belongs to the class-I aminoacyl-tRNA synthetase family.

The protein localises to the cytoplasm. The enzyme catalyses tRNA(Leu) + L-leucine + ATP = L-leucyl-tRNA(Leu) + AMP + diphosphate. The polypeptide is Leucine--tRNA ligase (Solibacter usitatus (strain Ellin6076)).